We begin with the raw amino-acid sequence, 426 residues long: Gamma-glutamylputrescine oxidoreductase (426 aa).

The protein belongs to the gamma-glutamylputrescine oxidoreductase family.

The enzyme catalyses gamma-L-glutamylputrescine + O2 + H2O = 4-(gamma-L-glutamylamino)butanal + H2O2 + NH4(+). The protein operates within amine and polyamine degradation; putrescine degradation; 4-aminobutanoate from putrescine: step 2/4. In terms of biological role, involved in the breakdown of putrescine via the oxidation of L-glutamylputrescine. This chain is Gamma-glutamylputrescine oxidoreductase (puuB), found in Escherichia coli (strain K12).